Here is a 420-residue protein sequence, read N- to C-terminus: UDP-N-acetylglucosamine 1-carboxyvinyltransferase (420 aa).

Lys22–Asn23 contacts phosphoenolpyruvate. A UDP-N-acetyl-alpha-D-glucosamine-binding site is contributed by Arg91. Residue Cys115 is the Proton donor of the active site. Cys115 carries the 2-(S-cysteinyl)pyruvic acid O-phosphothioketal modification. Residues Arg120–Leu124, Lys160–Val163, Asp305, and Ile327 contribute to the UDP-N-acetyl-alpha-D-glucosamine site.

It belongs to the EPSP synthase family. MurA subfamily.

It is found in the cytoplasm. The catalysed reaction is phosphoenolpyruvate + UDP-N-acetyl-alpha-D-glucosamine = UDP-N-acetyl-3-O-(1-carboxyvinyl)-alpha-D-glucosamine + phosphate. The protein operates within cell wall biogenesis; peptidoglycan biosynthesis. Cell wall formation. Adds enolpyruvyl to UDP-N-acetylglucosamine. The protein is UDP-N-acetylglucosamine 1-carboxyvinyltransferase of Proteus mirabilis (strain HI4320).